Here is a 451-residue protein sequence, read N- to C-terminus: Rab GDP-dissociation inhibitor (451 aa).

Interaction with YPT1 stretches follow at residues 106 to 112 (RYVDFKQ) and 234 to 259 (YPMY…TYML).

Belongs to the Rab GDI family. Interacts with the GDP-bound form of Rab GTPase YPT1. Interacts with YPT10.

Its subcellular location is the cytoplasm. Its function is as follows. Regulates the GDP/GTP exchange reaction of SEC4 by inhibiting the dissociation of GDP from it, and the subsequent binding of GTP to SEC4. Plays an essential role in the yeast secretory pathway. Extracts GDP-bound YPT7 from vacuolar membranes, antagonizing vacuolar membrane fusion. This chain is Rab GDP-dissociation inhibitor (GDI1), found in Saccharomyces cerevisiae (strain ATCC 204508 / S288c) (Baker's yeast).